A 373-amino-acid polypeptide reads, in one-letter code: Secondary metabolism regulator laeA (373 aa).

2 disordered regions span residues 1–21 and 53–81; these read MFLNGQGGQRPPTVASPPLNV and AAERDPAAGRWHANGSPSINSTSSKNPDR. Positions 67 to 77 are enriched in polar residues; that stretch reads GSPSINSTSSK.

It belongs to the methyltransferase superfamily. LaeA methyltransferase family. In terms of assembly, component of the heterotrimeric velvet complex composed of laeA, veA and velB; VeA acting as a bridging protein between laeA and velB.

The protein resides in the nucleus. It catalyses the reaction L-methionyl-[protein] + S-adenosyl-L-methionine = S-methyl-L-methionyl-[protein] + S-adenosyl-L-homocysteine. In terms of biological role, methyltransferase that performs automethylation. No other methyl-accepting substrate has been identified yet. Component of the velvet transcription factor complex that acts as a global regulator for secondary metabolite gene expression. Controls the expression of the cyclopiazonic acid (CPA) gene clusters. Regulates also pigmentation and conidial head morphology. The protein is Secondary metabolism regulator laeA of Aspergillus fumisynnematus.